A 174-amino-acid chain; its full sequence is Protein-export protein SecB (174 aa).

Belongs to the SecB family. In terms of assembly, homotetramer, a dimer of dimers. One homotetramer interacts with 1 SecA dimer.

It is found in the cytoplasm. Functionally, one of the proteins required for the normal export of preproteins out of the cell cytoplasm. It is a molecular chaperone that binds to a subset of precursor proteins, maintaining them in a translocation-competent state. It also specifically binds to its receptor SecA. This chain is Protein-export protein SecB, found in Ehrlichia ruminantium (strain Gardel).